Reading from the N-terminus, the 375-residue chain is NADH-ubiquinone oxidoreductase 40 kDa subunit, mitochondrial (375 aa).

Residues 1–26 (MAPLTAAMRSTPRIIVSNAFGFQRRA) constitute a mitochondrion transit peptide.

Belongs to the complex I NDUFA9 subunit family. In terms of assembly, complex I is composed of about 40 different subunits. FAD serves as cofactor.

The protein resides in the mitochondrion matrix. Accessory subunit of the mitochondrial membrane respiratory chain NADH dehydrogenase (Complex I), that is believed not to be involved in catalysis. Complex I functions in the transfer of electrons from NADH to the respiratory chain. The immediate electron acceptor for the enzyme is believed to be ubiquinone. In Neurospora crassa (strain ATCC 24698 / 74-OR23-1A / CBS 708.71 / DSM 1257 / FGSC 987), this protein is NADH-ubiquinone oxidoreductase 40 kDa subunit, mitochondrial (nuo40).